The following is a 109-amino-acid chain: MDYVSLLNQIWQKYLNSPYTTCLYIPKPTAKYTPLVGTSLHPVLWNCQLSFAGYTESAVNSTKALAKQDAAQRIAWLLHKDGGIPDGCSLYLRHSSLFAQSEEEESFSN.

As to quaternary structure, interacts with host PRKRA/PACT.

It is found in the host cytoplasm. Its function is as follows. DsRNA-binding protein that plays a role in the inhibition of host innate response. Suppresses host PACT-induced activation of RIGI and MDA5 and thereby circumvents the production of type I interferons. Also prevents the activation of host NF-kappa-B. Inhibits the integrated stress response (ISR) in the infected cell by binding to dsRNA and inhibiting EIF2AK2-mediated phosphorylation of EIF2S1/eIF2-alpha. Stress granule formation is thus inhibited, which allows protein synthesis and viral replication. The polypeptide is Non-structural protein ORF4a (ORF4a) (Middle East respiratory syndrome-related coronavirus (isolate United Kingdom/H123990006/2012) (MERS-CoV)).